The primary structure comprises 222 residues: Large ribosomal subunit protein uL3 (222 aa).

The disordered stretch occupies residues 129 to 150; sequence HNFRGLPDSHGTERKHRSPGSI.

The protein belongs to the universal ribosomal protein uL3 family. Part of the 50S ribosomal subunit. Forms a cluster with proteins L14 and L19.

Its function is as follows. One of the primary rRNA binding proteins, it binds directly near the 3'-end of the 23S rRNA, where it nucleates assembly of the 50S subunit. The sequence is that of Large ribosomal subunit protein uL3 from Acidothermus cellulolyticus (strain ATCC 43068 / DSM 8971 / 11B).